We begin with the raw amino-acid sequence, 383 residues long: Chitinase-3-like protein 1 (383 aa).

The first 21 residues, 1–21, serve as a signal peptide directing secretion; the sequence is MGLRVAQTGFVALVLLQSCAA. Residues 22-383 form the GH18 domain; sequence YKLVCYYTSW…SAIKDVLAAA (362 aa). C26 and C51 are joined by a disulfide. N60 carries N-linked (GlcNAc...) asparagine glycosylation. Chitin-binding positions include 70-71, 97-100, Y141, 204-207, and R263; these read EW, GGWN, and LTYD. C300 and C364 are joined by a disulfide. The segment at 324–338 is important for AKT1 activation and IL8 production; sequence QWVGYDDQESVKNKA. Position 352 (W352) interacts with chitin.

The protein belongs to the glycosyl hydrolase 18 family. As to quaternary structure, monomer. In terms of tissue distribution, detected in smooth muscle cells in atherosclerotic plaques. Detected in regions of vascular occlusion in the aorta.

It is found in the secreted. The protein resides in the extracellular space. The protein localises to the cytoplasm. Its subcellular location is the perinuclear region. It localises to the endoplasmic reticulum. Functionally, carbohydrate-binding lectin with a preference for chitin. Has no chitinase activity. May play a role in tissue remodeling and in the capacity of cells to respond to and cope with changes in their environment. Plays a role in T-helper cell type 2 (Th2) inflammatory response and IL-13-induced inflammation, regulating allergen sensitization, inflammatory cell apoptosis, dendritic cell accumulation and M2 macrophage differentiation. Facilitates invasion of pathogenic enteric bacteria into colonic mucosa and lymphoid organs. Mediates activation of AKT1 signaling pathway and subsequent IL8 production in colonic epithelial cells. Regulates antibacterial responses in lung by contributing to macrophage bacterial killing, controlling bacterial dissemination and augmenting host tolerance. Also regulates hyperoxia-induced injury, inflammation and epithelial apoptosis in lung. Stimulates migration and adhesion of cultured vascular smooth muscle cells. The chain is Chitinase-3-like protein 1 (CHI3L1) from Sus scrofa (Pig).